Reading from the N-terminus, the 535-residue chain is Glucose-6-phosphate isomerase (535 aa).

Glu-359 (proton donor) is an active-site residue. Active-site residues include His-390 and Lys-505.

The protein belongs to the GPI family.

The protein resides in the cytoplasm. It catalyses the reaction alpha-D-glucose 6-phosphate = beta-D-fructose 6-phosphate. The protein operates within carbohydrate biosynthesis; gluconeogenesis. It participates in carbohydrate degradation; glycolysis; D-glyceraldehyde 3-phosphate and glycerone phosphate from D-glucose: step 2/4. In terms of biological role, catalyzes the reversible isomerization of glucose-6-phosphate to fructose-6-phosphate. This chain is Glucose-6-phosphate isomerase, found in Treponema pallidum (strain Nichols).